The chain runs to 208 residues: ATP phosphoribosyltransferase (208 aa).

This sequence belongs to the ATP phosphoribosyltransferase family. Short subfamily. As to quaternary structure, heteromultimer composed of HisG and HisZ subunits.

It localises to the cytoplasm. The enzyme catalyses 1-(5-phospho-beta-D-ribosyl)-ATP + diphosphate = 5-phospho-alpha-D-ribose 1-diphosphate + ATP. The protein operates within amino-acid biosynthesis; L-histidine biosynthesis; L-histidine from 5-phospho-alpha-D-ribose 1-diphosphate: step 1/9. Its function is as follows. Catalyzes the condensation of ATP and 5-phosphoribose 1-diphosphate to form N'-(5'-phosphoribosyl)-ATP (PR-ATP). Has a crucial role in the pathway because the rate of histidine biosynthesis seems to be controlled primarily by regulation of HisG enzymatic activity. This is ATP phosphoribosyltransferase (hisG) from Thermotoga maritima (strain ATCC 43589 / DSM 3109 / JCM 10099 / NBRC 100826 / MSB8).